Consider the following 694-residue polypeptide: MEAWGQSPACSSSRKARTGPSLASVLNDLPSAATLRYRGPGVLPWGTLDEDDDEGGRSLQAFAETAQMESHPSRELPWPMQARRAHRKSQATGQLASGSESRAAYWTRQLSRTKGKMKEGFQTIQPWAWTLKKIGGQFGAGTESYFSLLRFLLFLNLVASVIEICMKLIPTWLEGAPPGPPGPNISSPCGSYIPHTHGLVAFPTQLFNLLSGEGYLEWSPLFYGFYPPRSNLAITYLCSVFAISVIYLLCILRRSVSGLKETLLAESDILTSYSHRVFSAWNFGLCGDVHVRLRQRIILYELQVDLEEAVVRRRAAEQTLSQRAKVWSMRALLNVLVLALLGAAFYGIYWATEYTLTLQETPLVRQTPLFKLLVDYLPSIFISLFNFVLPPVFKFIASLEGYTQSRQIVLILLRTVFLRLASLVFLLVSLWSQITCGGNMEAEGCKACGYNYKEIPCWETRLGQEMYKLVLFDLLMGLLVTLLVQFPRKILCGLCPGALGRLSGTLEFQVPDEVLGLIYAQTVVWVGSFFCPLLPLINTAKFLILFCLKKITLFSIYSPASRTFRASTANFFFPLVLLVGLAISAVPVLYSIFLIPPSKLCGPFRGKLSIWAQIPEAIESLPQTAQNFLYFLGTQAFTVPLLILSSILMMYTVALANCYGRLISELKRQIETEVQNKVFLAQRAVALSSRNGTS.

A disordered region spans residues 1 to 21 (MEAWGQSPACSSSRKARTGPS). Topologically, residues 1–150 (MEAWGQSPAC…GTESYFSLLR (150 aa)) are extracellular. The helical transmembrane segment at 151–171 (FLLFLNLVASVIEICMKLIPT) threads the bilayer. At 172-231 (WLEGAPPGPPGPNISSPCGSYIPHTHGLVAFPTQLFNLLSGEGYLEWSPLFYGFYPPRSN) the chain is on the cytoplasmic side. Residues 232-252 (LAITYLCSVFAISVIYLLCIL) form a helical membrane-spanning segment. At 253–330 (RRSVSGLKET…SQRAKVWSMR (78 aa)) the chain is on the extracellular side. A helical membrane pass occupies residues 331-351 (ALLNVLVLALLGAAFYGIYWA). Residues 352-376 (TEYTLTLQETPLVRQTPLFKLLVDY) are Cytoplasmic-facing. The chain crosses the membrane as a helical span at residues 377–397 (LPSIFISLFNFVLPPVFKFIA). Topologically, residues 398-407 (SLEGYTQSRQ) are extracellular. Residues 408 to 428 (IVLILLRTVFLRLASLVFLLV) form a helical membrane-spanning segment. At 429-465 (SLWSQITCGGNMEAEGCKACGYNYKEIPCWETRLGQE) the chain is on the cytoplasmic side. Residues 466–486 (MYKLVLFDLLMGLLVTLLVQF) traverse the membrane as a helical segment. At 487 to 513 (PRKILCGLCPGALGRLSGTLEFQVPDE) the chain is on the extracellular side. A helical membrane pass occupies residues 514-534 (VLGLIYAQTVVWVGSFFCPLL). A topological domain (cytoplasmic) is located at residue Pro535. A helical transmembrane segment spans residues 536–556 (LINTAKFLILFCLKKITLFSI). The Extracellular portion of the chain corresponds to 557-574 (YSPASRTFRASTANFFFP). Residues 575–595 (LVLLVGLAISAVPVLYSIFLI) traverse the membrane as a helical segment. Residues 596-635 (PPSKLCGPFRGKLSIWAQIPEAIESLPQTAQNFLYFLGTQ) lie on the Cytoplasmic side of the membrane. The helical transmembrane segment at 636–656 (AFTVPLLILSSILMMYTVALA) threads the bilayer. The Extracellular segment spans residues 657 to 694 (NCYGRLISELKRQIETEVQNKVFLAQRAVALSSRNGTS). Residue Asn691 is glycosylated (N-linked (GlcNAc...) asparagine).

Belongs to the TMC family. In terms of tissue distribution, expressed in taste bud cells of the posterior tongue. Ubiquitously expressed.

The protein resides in the membrane. The enzyme catalyses chloride(in) = chloride(out). Functionally, voltage-gated chloride channel involved in high-concentration salt taste sensation. Depolarization induced by high NaCl concentration may trigger the activation of TMC4-mediated chloride influx into taste bud cells, helping the return to resting potential. Also allows permeation of organic anions including gluconate, but their current amplitudes at positive potentials are less than that of chloride. Involved in pH and temperature-dependent modulation of salty taste. This chain is Voltage-gated chloride channel TMC4, found in Mus musculus (Mouse).